The sequence spans 602 residues: MYQGHMQGKGSRAADKAVAMVMKEIPREESAEEKPLLTMTSQLVNEQQESRPLLSPSIDDFLCETKSEAIAKPVTSNTAVLTTGLDLLDLSEPVSQTQTKAKKSESSSKSSSLKKKADGSDLISADAEQRAQALRGPETSSLDLDIQTQLEKWDDVKFHGDRTSKGHLMAERKSCSSRAGSKELLWSSEHRSQPELSTGKSALNSESASELELVAPAQARLTKEHRWGSALLSRNHSLEEEFERAKAAVESDTEFWDKMQAEWEEMARRNWISENQEAQNQVTVSASEKGYYFHTENPFKDWPGAFEEGLKRLKEGDLPVTILFMEAAILQDPGNAEAWQFLGITQAENENEQAAIVALQRCLELQPNNLKALMALAVSYTNTSHQQDACEALKNWIKQNPKYKYLVKNKKGSPGLTRRMSKSPVDSSVLEGVKDLYLEAAHQNGDMIDPDLQTGLGVLFHLSGEFNRAIDAFNAALTVRPEDYSLWNRLGATLANGDRSEEAVEAYTRALEIQPGFIRSRYNLGISCINLGAYREAVSNFLTALSLQRKSRNQQQVPHPAISGNIWAALRIALSLMDQPELFQAANLGDLDVLLRAFNLDP.

Disordered stretches follow at residues 94–140 (VSQT…PETS) and 167–206 (HLMA…LNSE). 4 positions are modified to phosphoserine: Ser181, Ser229, Ser233, and Ser237. TPR repeat units follow at residues 302–335 (WPGA…DPGN), 336–369 (AEAW…QPNN), and 371–403 (KALM…NPKY). 2 positions are modified to phosphoserine: Ser421 and Ser423. TPR repeat units follow at residues 450–483 (PDLQ…RPED), 485–517 (SLWN…QPGF), and 519–551 (RSRY…QRKS).

The protein belongs to the peroxisomal targeting signal receptor family. Forms an obligate 4:4 complex with HCN2. Interacts with RAB8B. Interacts with HCN3. Interacts with HCN4 with a 4:4 HCN4:PEX5L stoichiometry; reduces the effects of cAMP on the voltage-dependence and rate of activation of HCN4. Brain specific.

It is found in the cytoplasm. Its subcellular location is the membrane. Functionally, accessory subunit of hyperpolarization-activated cyclic nucleotide-gated (HCN) channels, regulating their cell-surface expression and cyclic nucleotide dependence. The protein is PEX5-related protein (Pex5l) of Rattus norvegicus (Rat).